Consider the following 201-residue polypeptide: Ephrin-A4 (201 aa).

Positions 1 to 25 are cleaved as a signal peptide; the sequence is MRLLPLLRTVLWAAFLGSPLRGGSS. The 130-residue stretch at 26–155 folds into the Ephrin RBD domain; that stretch reads LRHVVYWNSS…RLQVSVCCKE (130 aa). Asparagine 33 is a glycosylation site (N-linked (GlcNAc...) asparagine). Intrachain disulfides connect cysteine 58/cysteine 99 and cysteine 86/cysteine 144. Serine 170 carries the GPI-anchor amidated serine lipid modification. Residues 171 to 201 constitute a propeptide, removed in mature form; sequence GTSGWRGGDTPSPLCLLLLLLLLILRLLRIL.

It belongs to the ephrin family. In terms of tissue distribution, expressed in the adult spleen, lymph node, prostate, ovary, small intestine, and colon, and in fetal heart, lung, liver and kidney. Also detected in hematopoietic cell lines.

Its subcellular location is the cell membrane. It is found in the secreted. Its function is as follows. Cell surface GPI-bound ligand for Eph receptors, a family of receptor tyrosine kinases which are crucial for migration, repulsion and adhesion during neuronal, vascular and epithelial development. Binds promiscuously Eph receptors residing on adjacent cells, leading to contact-dependent bidirectional signaling into neighboring cells. May play a role in the interaction between activated B-lymphocytes and dendritic cells in tonsils. The polypeptide is Ephrin-A4 (EFNA4) (Homo sapiens (Human)).